A 368-amino-acid chain; its full sequence is Transcription factor TGA1 (368 aa).

A compositionally biased stretch (polar residues) spans 53–65; that stretch reads LDNNVSEDTSHGT. Residues 53 to 83 are disordered; that stretch reads LDNNVSEDTSHGTAGTPHMFDQEASTSRHPD. One can recognise a bZIP domain in the interval 82 to 145; it reads PDKIQRRLAQ…NGIDTNSLGF (64 aa). Coiled coils occupy residues 83–131 and 261–281; these read DKIQ…RQQG and NLKQSCQQAEDALTQGMEKLQ. The interval 84-104 is basic motif; it reads KIQRRLAQNREAARKSRLRKK. The tract at residues 110–124 is leucine-zipper; sequence LETSRLKLIQLEQEL. One can recognise a DOG1 domain in the interval 153–363; sequence IAAFEMEYGH…RALSSSWATR (211 aa). Residues Cys260 and Cys266 are joined by a disulfide bond.

This sequence belongs to the bZIP family. In terms of assembly, binds DNA as a dimer. The reduced form interacts with NPR1. As to expression, predominantly expressed in roots.

The protein resides in the nucleus. In terms of biological role, transcriptional activator that binds specifically to the DNA sequence 5'-TGACG-3'. Recognizes ocs elements like the as-1 motif of the cauliflower mosaic virus 35S promoter. Binding to the as-1-like cis elements mediate auxin- and salicylic acid-inducible transcription. May be involved in the induction of the systemic acquired resistance (SAR) via its interaction with NPR1. Could also bind to the Hex-motif (5'-TGACGTGG-3') another cis-acting element found in plant histone promoters. This is Transcription factor TGA1 (TGA1) from Arabidopsis thaliana (Mouse-ear cress).